The primary structure comprises 312 residues: Formate dehydrogenase iron-sulfur subunit (312 aa).

4 4Fe-4S ferredoxin-type domains span residues 35–65 (IAKL…SDIN), 97–129 (LEWL…QYAN), 130–159 (GIVD…MNPE), and 164–195 (YKCT…FGSK). [4Fe-4S] cluster is bound by residues Cys-44, Cys-47, Cys-50, Cys-54, Cys-106, Cys-109, Cys-114, Cys-118, Cys-139, Cys-142, Cys-145, Cys-149, Cys-166, Cys-169, Cys-181, and Cys-185.

In terms of assembly, formate dehydrogenase is a membrane-bound complex, formed by subunits alpha, beta and gamma. Requires [4Fe-4S] cluster as cofactor.

Its subcellular location is the cell membrane. In terms of biological role, allows to use formate as major electron donor during aerobic respiration. The beta chain is an electron transfer unit containing 4 cysteine clusters involved in the formation of iron-sulfur centers. Electrons are transferred from the gamma chain to the molybdenum cofactor of the alpha subunit. The polypeptide is Formate dehydrogenase iron-sulfur subunit (fdxH) (Haemophilus influenzae (strain ATCC 51907 / DSM 11121 / KW20 / Rd)).